The sequence spans 516 residues: Thiosulfate sulfurtransferase/rhodanese-like domain-containing protein 2 (516 aa).

The residue at position 269 (serine 269) is a Phosphoserine. The 96-residue stretch at 301-396 (EQSDTILLDC…YLEEFPDGFY (96 aa)) folds into the Rhodanese domain. Cysteine 355 serves as the catalytic Cysteine persulfide intermediate. Positions 490-516 (RELLQHVRQPVSPEPGPDAEEDGPVLV) are disordered. The segment covering 506–516 (PDAEEDGPVLV) has biased composition (acidic residues).

In Pongo abelii (Sumatran orangutan), this protein is Thiosulfate sulfurtransferase/rhodanese-like domain-containing protein 2 (TSTD2).